We begin with the raw amino-acid sequence, 387 residues long: Formate-dependent phosphoribosylglycinamide formyltransferase (387 aa).

Residues 21–22 (EL) and Glu81 contribute to the N(1)-(5-phospho-beta-D-ribosyl)glycinamide site. ATP is bound by residues Arg113, Lys154, 159-164 (SSGHGQ), 193-196 (EEFI), and Glu201. In terms of domain architecture, ATP-grasp spans 118-306 (TFAAEEVGVK…EFALHLRAVL (189 aa)). Mg(2+)-binding residues include Glu265 and Glu277. Residues Asp284, Lys352, and 359 to 360 (RR) contribute to the N(1)-(5-phospho-beta-D-ribosyl)glycinamide site.

The protein belongs to the PurK/PurT family. As to quaternary structure, homodimer.

It catalyses the reaction N(1)-(5-phospho-beta-D-ribosyl)glycinamide + formate + ATP = N(2)-formyl-N(1)-(5-phospho-beta-D-ribosyl)glycinamide + ADP + phosphate + H(+). It participates in purine metabolism; IMP biosynthesis via de novo pathway; N(2)-formyl-N(1)-(5-phospho-D-ribosyl)glycinamide from N(1)-(5-phospho-D-ribosyl)glycinamide (formate route): step 1/1. In terms of biological role, involved in the de novo purine biosynthesis. Catalyzes the transfer of formate to 5-phospho-ribosyl-glycinamide (GAR), producing 5-phospho-ribosyl-N-formylglycinamide (FGAR). Formate is provided by PurU via hydrolysis of 10-formyl-tetrahydrofolate. The sequence is that of Formate-dependent phosphoribosylglycinamide formyltransferase from Wolinella succinogenes (strain ATCC 29543 / DSM 1740 / CCUG 13145 / JCM 31913 / LMG 7466 / NCTC 11488 / FDC 602W) (Vibrio succinogenes).